The primary structure comprises 582 residues: Proline--tRNA ligase (582 aa).

Belongs to the class-II aminoacyl-tRNA synthetase family. ProS type 1 subfamily. Homodimer.

The protein resides in the cytoplasm. The catalysed reaction is tRNA(Pro) + L-proline + ATP = L-prolyl-tRNA(Pro) + AMP + diphosphate. In terms of biological role, catalyzes the attachment of proline to tRNA(Pro) in a two-step reaction: proline is first activated by ATP to form Pro-AMP and then transferred to the acceptor end of tRNA(Pro). As ProRS can inadvertently accommodate and process non-cognate amino acids such as alanine and cysteine, to avoid such errors it has two additional distinct editing activities against alanine. One activity is designated as 'pretransfer' editing and involves the tRNA(Pro)-independent hydrolysis of activated Ala-AMP. The other activity is designated 'posttransfer' editing and involves deacylation of mischarged Ala-tRNA(Pro). The misacylated Cys-tRNA(Pro) is not edited by ProRS. The polypeptide is Proline--tRNA ligase (Mycobacterium avium (strain 104)).